A 416-amino-acid chain; its full sequence is Phosphatidylinositol 5-phosphate 4-kinase type-2 beta (416 aa).

N-acetylserine is present on serine 2. Threonine 8 carries the phosphothreonine modification. A Phosphoserine modification is found at serine 19. Residues 38-415 (ASEPILSVLM…RFNEFMSNIL (378 aa)) enclose the PIPK domain. A required for interaction with PIP5K1A region spans residues 64-70 (VMLMPDD). N6-acetyllysine is present on residues lysine 94 and lysine 150. ATP-binding positions include 202–204 (RNV) and lysine 214. GTP contacts are provided by residues 203–204 (NV) and lysine 214. Phosphothreonine is present on threonine 322. A Phosphoserine modification is found at serine 326. Aspartate 369 is a binding site for GTP.

As to quaternary structure, homodimer. Binds TNFRSF1A. Interacts with PIP4K2A; the interaction suppresses ubiquitination by the SPOP/CUL3 complex. In terms of processing, ubiquitinated by the SPOP/CUL3 complex. Ubiquitination is stimulated by PtdIns5P levels. Phosphorylated on serine residues. In terms of tissue distribution, highly expressed in brain, heart, pancreas, skeletal muscle and kidney. Detected at lower levels in placenta, lung and liver.

The protein resides in the endoplasmic reticulum membrane. It localises to the cell membrane. It is found in the nucleus. Its subcellular location is the cytoplasm. The catalysed reaction is a 1,2-diacyl-sn-glycero-3-phospho-(1D-myo-inositol-5-phosphate) + ATP = a 1,2-diacyl-sn-glycero-3-phospho-(1D-myo-inositol-4,5-bisphosphate) + ADP + H(+). It catalyses the reaction 1,2-dihexadecanoyl-sn-glycero-3-phospho-(1D-myo-inositol-5-phosphate) + ATP = 1,2-dihexadecanoyl-sn-glycero-3-phospho-(1D-myo-inositol-4,5-bisphosphate) + ADP + H(+). It carries out the reaction 1,2-dihexadecanoyl-sn-glycero-3-phospho-(1D-myo-inositol-5-phosphate) + GTP = 1,2-dihexadecanoyl-sn-glycero-3-phospho-(1D-myo-inositol-4,5-bisphosphate) + GDP + H(+). Participates in the biosynthesis of phosphatidylinositol 4,5-bisphosphate. Preferentially utilizes GTP, rather than ATP, for PI(5)P phosphorylation and its activity reflects changes in direct proportion to the physiological GTP concentration. Its GTP-sensing activity is critical for metabolic adaptation. PIP4Ks negatively regulate insulin signaling through a catalytic-independent mechanism. They interact with PIP5Ks and suppress PIP5K-mediated PtdIns(4,5)P2 synthesis and insulin-dependent conversion to PtdIns(3,4,5)P3. The sequence is that of Phosphatidylinositol 5-phosphate 4-kinase type-2 beta from Homo sapiens (Human).